Reading from the N-terminus, the 401-residue chain is MTALDRRYDTQIHRRVTRTVMVGSVPIGSEHPIAVQSMINEDTLDIDGSVAGIIRLVDAGCEIVRVTTPSIGHAKAMGKIKAELSAKGCNVPLVADVHHNGTKIALEVAQHVDKVRINPGLFVFDKPDPNRQEFTESEFAEIGTRIRETFEPLVKLLREQNKALRIGVNHGSLAERMLFTYGDTPKGMVESAMEFVRICDDLDFHNIVISMKASRAPVMLSAYRLMADTMDQEGFNYPLHLGVTEAGDGDYGRIKSTAGIATLLAEGLGDTIRVSLTEAPEKEIPVCYSILQSLGLRKTMVEYIACPSCGRTLFNLEDVLHKVRNATSHLKGLDIAVMGCIVNGPGEMADADYGYVGKGPGIIALYRGREEIRKVPEKEGVQALIQLIQEDGLWVDPDETR.

[4Fe-4S] cluster contacts are provided by cysteine 306, cysteine 309, cysteine 340, and glutamate 347.

Belongs to the IspG family. [4Fe-4S] cluster serves as cofactor.

The enzyme catalyses (2E)-4-hydroxy-3-methylbut-2-enyl diphosphate + 2 oxidized [2Fe-2S]-[ferredoxin] + H2O = 2-C-methyl-D-erythritol 2,4-cyclic diphosphate + 2 reduced [2Fe-2S]-[ferredoxin] + H(+). It functions in the pathway isoprenoid biosynthesis; isopentenyl diphosphate biosynthesis via DXP pathway; isopentenyl diphosphate from 1-deoxy-D-xylulose 5-phosphate: step 5/6. Converts 2C-methyl-D-erythritol 2,4-cyclodiphosphate (ME-2,4cPP) into 1-hydroxy-2-methyl-2-(E)-butenyl 4-diphosphate. The protein is 4-hydroxy-3-methylbut-2-en-1-yl diphosphate synthase (ferredoxin) of Synechococcus sp. (strain CC9902).